The following is a 338-amino-acid chain: MIQKNWQELTKPNKLEVISGDDPKRFATIVAGPLELGFGLTLGNSLRRILLSSLQGAAITSVHIDGVLHEFSSIPGVREDVTDIVLNIKDIAIKMPGDGPKRLVLKKQGPGKVTAGDIQTSGDISILNPGLVICTLDEGAEIRMEFTVHTGKGYVAADRNRAEDAPIGLIPIDSLYSPVKKVSYRVENTREGQNLDLDKLTLQVETNGALTPEDAVAFAARILQDQLNVFVNFEEPRRVEATPSIPELAFNPALLKKVDELELSVRSANCLKNDNIVYIGDLIQKSEGEMLRTPNFGRKSLNEIKEVLAQMGLHLGMEVNGWPPDNIDDLAKRFEEHY.

Residues 1-234 are alpha N-terminal domain (alpha-NTD); it reads MIQKNWQELT…DQLNVFVNFE (234 aa). The alpha C-terminal domain (alpha-CTD) stretch occupies residues 250 to 338; that stretch reads FNPALLKKVD…DLAKRFEEHY (89 aa).

Belongs to the RNA polymerase alpha chain family. Homodimer. The RNAP catalytic core consists of 2 alpha, 1 beta, 1 beta' and 1 omega subunit. When a sigma factor is associated with the core the holoenzyme is formed, which can initiate transcription.

The enzyme catalyses RNA(n) + a ribonucleoside 5'-triphosphate = RNA(n+1) + diphosphate. In terms of biological role, DNA-dependent RNA polymerase catalyzes the transcription of DNA into RNA using the four ribonucleoside triphosphates as substrates. The chain is DNA-directed RNA polymerase subunit alpha from Methylocella silvestris (strain DSM 15510 / CIP 108128 / LMG 27833 / NCIMB 13906 / BL2).